The chain runs to 362 residues: Glycyl-glycine endopeptidase ALE-1 (362 aa).

The signal sequence occupies residues 1-35; sequence MDTNRKFTLVKSLSIGLGTFLVGSVFLTVNDEASA. Residues 35–110 are disordered; it reads ASTKVDAPKV…PAKADAPKVE (76 aa). Basic and acidic residues predominate over residues 40 to 110; it reads DAPKVEQEAP…PAKADAPKVE (71 aa). The Zn(2+) site is built by H150 and D154. Residue H231 is part of the active site. Residue H233 coordinates Zn(2+). In terms of domain architecture, SH3b spans 282-350; it reads SESASFTANT…YLPVRTWNES (69 aa).

Belongs to the peptidase M23B family. The cofactor is Zn(2+).

The protein localises to the secreted. The catalysed reaction is Hydrolysis of the -Gly-|-Gly- bond in the pentaglycine inter-peptide link joining staphylococcal cell wall peptidoglycans.. Its function is as follows. Lyses staphylococcal cells by hydrolyzing the polyglycine interpeptide bridges of the peptidoglycan. This is Glycyl-glycine endopeptidase ALE-1 from Staphylococcus capitis.